Here is a 513-residue protein sequence, read N- to C-terminus: Cobyric acid synthase (513 aa).

Residues 252-457 (KIDIAVIRLP…LHGIFDEEGI (206 aa)) enclose the GATase cobBQ-type domain. Cys-333 (nucleophile) is an active-site residue. The active site involves His-449.

This sequence belongs to the CobB/CobQ family. CobQ subfamily.

It participates in cofactor biosynthesis; adenosylcobalamin biosynthesis. In terms of biological role, catalyzes amidations at positions B, D, E, and G on adenosylcobyrinic A,C-diamide. NH(2) groups are provided by glutamine, and one molecule of ATP is hydrogenolyzed for each amidation. The protein is Cobyric acid synthase of Lachnoclostridium phytofermentans (strain ATCC 700394 / DSM 18823 / ISDg) (Clostridium phytofermentans).